Reading from the N-terminus, the 115-residue chain is Large ribosomal subunit protein uL22 (115 aa).

It belongs to the universal ribosomal protein uL22 family. In terms of assembly, part of the 50S ribosomal subunit.

Its function is as follows. This protein binds specifically to 23S rRNA; its binding is stimulated by other ribosomal proteins, e.g. L4, L17, and L20. It is important during the early stages of 50S assembly. It makes multiple contacts with different domains of the 23S rRNA in the assembled 50S subunit and ribosome. In terms of biological role, the globular domain of the protein is located near the polypeptide exit tunnel on the outside of the subunit, while an extended beta-hairpin is found that lines the wall of the exit tunnel in the center of the 70S ribosome. The protein is Large ribosomal subunit protein uL22 of Coxiella burnetii (strain CbuK_Q154) (Coxiella burnetii (strain Q154)).